The following is a 274-amino-acid chain: NAD kinase (274 aa).

Residue Asp-50 is the Proton acceptor of the active site. Residues 50 to 51 (DG), 126 to 127 (NE), Arg-152, Asp-154, 165 to 170 (TAYNKS), and Ala-189 each bind NAD(+).

The protein belongs to the NAD kinase family. It depends on a divalent metal cation as a cofactor.

Its subcellular location is the cytoplasm. The enzyme catalyses NAD(+) + ATP = ADP + NADP(+) + H(+). Its function is as follows. Involved in the regulation of the intracellular balance of NAD and NADP, and is a key enzyme in the biosynthesis of NADP. Catalyzes specifically the phosphorylation on 2'-hydroxyl of the adenosine moiety of NAD to yield NADP. The polypeptide is NAD kinase (Streptococcus gordonii (strain Challis / ATCC 35105 / BCRC 15272 / CH1 / DL1 / V288)).